The primary structure comprises 148 residues: MSIIDNRKAYHDYFIEEKYEAGLVLEGWEVKAIRAGRANIKEAYIIVRGEEIFILGMHITPLASASTHIRTDPTRTRKLLLHGAEIARLIGKVERAGFTLVPLDLHYAKGRVKAEIGLAKGKKQYDKREDEKKRDWEREKQRLMRVKA.

This sequence belongs to the SmpB family.

The protein localises to the cytoplasm. Its function is as follows. Required for rescue of stalled ribosomes mediated by trans-translation. Binds to transfer-messenger RNA (tmRNA), required for stable association of tmRNA with ribosomes. tmRNA and SmpB together mimic tRNA shape, replacing the anticodon stem-loop with SmpB. tmRNA is encoded by the ssrA gene; the 2 termini fold to resemble tRNA(Ala) and it encodes a 'tag peptide', a short internal open reading frame. During trans-translation Ala-aminoacylated tmRNA acts like a tRNA, entering the A-site of stalled ribosomes, displacing the stalled mRNA. The ribosome then switches to translate the ORF on the tmRNA; the nascent peptide is terminated with the 'tag peptide' encoded by the tmRNA and targeted for degradation. The ribosome is freed to recommence translation, which seems to be the essential function of trans-translation. The chain is SsrA-binding protein from Azoarcus sp. (strain BH72).